Reading from the N-terminus, the 1126-residue chain is Replication protein 1a (1126 aa).

The segment at 69 to 406 is methyltransferase; the sequence is SFSLDATQQN…HTIIGGVTLI (338 aa). The 189-residue stretch at 90–278 folds into the Alphavirus-like MT domain; the sequence is VFSNSSSSSH…HRFSLLKHYL (189 aa). Residues 806 to 963 form the (+)RNA virus helicase ATP-binding domain; it reads DQSCVFASAE…HKLTGKVERK (158 aa). The segment at 834–1094 is ATP-dependent helicase; sequence TIVDGVAGCG…RHKKTFKYFT (261 aa). 838–845 provides a ligand contact to ATP; the sequence is GVAGCGKT. Residues 964–1125 form the (+)RNA virus helicase C-terminal domain; that stretch reads LITWRSPADA…SILARSYNHN (162 aa).

It belongs to the bromoviridae replication protein 1a family. As to quaternary structure, interacts with RNA-directed RNA polymerase 2a.

It is found in the host endoplasmic reticulum membrane. Functionally, involved in the virus replication. Contains a helicase domain and a methyltransferase domain. The methyltransferase domain is probably involved in viral RNA capping. Involved in the formation of ER membrane spherular invaginations in which RNA replication complexes form. In Alfalfa mosaic virus (AMV), this protein is Replication protein 1a.